Consider the following 182-residue polypeptide: Endoribonuclease YbeY (182 aa).

3 residues coordinate Zn(2+): His-120, His-124, and His-130. The tract at residues 157–182 is disordered; the sequence is RGVSFAPKPTGAGAFPSAADRDDTQN.

Belongs to the endoribonuclease YbeY family. Requires Zn(2+) as cofactor.

It localises to the cytoplasm. Single strand-specific metallo-endoribonuclease involved in late-stage 70S ribosome quality control and in maturation of the 3' terminus of the 16S rRNA. The protein is Endoribonuclease YbeY of Corynebacterium jeikeium (strain K411).